We begin with the raw amino-acid sequence, 471 residues long: Glutamate--tRNA ligase (471 aa).

The short motif at 9-19 (PSPTGYLHVGG) is the 'HIGH' region element. Residues Cys98, Cys100, Cys125, and His127 each coordinate Zn(2+). The 'KMSKS' region motif lies at 237 to 241 (KLSKR). Lys240 contributes to the ATP binding site.

The protein belongs to the class-I aminoacyl-tRNA synthetase family. Glutamate--tRNA ligase type 1 subfamily. As to quaternary structure, monomer. The cofactor is Zn(2+).

It is found in the cytoplasm. It catalyses the reaction tRNA(Glu) + L-glutamate + ATP = L-glutamyl-tRNA(Glu) + AMP + diphosphate. In terms of biological role, catalyzes the attachment of glutamate to tRNA(Glu) in a two-step reaction: glutamate is first activated by ATP to form Glu-AMP and then transferred to the acceptor end of tRNA(Glu). The chain is Glutamate--tRNA ligase from Escherichia coli O157:H7.